The following is a 200-amino-acid chain: MSAISAASVKALRDKTGAGMMDCKKALGECNGDEEKAVAWLREKGLSKAQKRAGRATSEGVIGSYIHSNGKLGVMVEIKCETDFVARSERFLEFAKNVAMQIAAANPVCVTPEEVPADLLAKEREIFKNQAMEEGKPEAIAEKIVDGRVKKLYKEICLLEQPFIKDDKVTIKDLMNELVGVIGENVQIGRFSRMALGEDA.

An involved in Mg(2+) ion dislocation from EF-Tu region spans residues T82–V85.

It belongs to the EF-Ts family.

It localises to the cytoplasm. Associates with the EF-Tu.GDP complex and induces the exchange of GDP to GTP. It remains bound to the aminoacyl-tRNA.EF-Tu.GTP complex up to the GTP hydrolysis stage on the ribosome. The chain is Elongation factor Ts from Solidesulfovibrio magneticus (strain ATCC 700980 / DSM 13731 / RS-1) (Desulfovibrio magneticus).